The following is a 144-amino-acid chain: D-aminoacyl-tRNA deacylase (144 aa).

The Gly-cisPro motif, important for rejection of L-amino acids motif lies at 136-137 (GP).

The protein belongs to the DTD family. In terms of assembly, homodimer.

Its subcellular location is the cytoplasm. It carries out the reaction glycyl-tRNA(Ala) + H2O = tRNA(Ala) + glycine + H(+). It catalyses the reaction a D-aminoacyl-tRNA + H2O = a tRNA + a D-alpha-amino acid + H(+). In terms of biological role, an aminoacyl-tRNA editing enzyme that deacylates mischarged D-aminoacyl-tRNAs. Also deacylates mischarged glycyl-tRNA(Ala), protecting cells against glycine mischarging by AlaRS. Acts via tRNA-based rather than protein-based catalysis; rejects L-amino acids rather than detecting D-amino acids in the active site. By recycling D-aminoacyl-tRNA to D-amino acids and free tRNA molecules, this enzyme counteracts the toxicity associated with the formation of D-aminoacyl-tRNA entities in vivo and helps enforce protein L-homochirality. The chain is D-aminoacyl-tRNA deacylase from Vibrio vulnificus (strain CMCP6).